The sequence spans 314 residues: 4-hydroxy-3-methylbut-2-enyl diphosphate reductase (314 aa).

Cys-12 serves as a coordination point for [4Fe-4S] cluster. The (2E)-4-hydroxy-3-methylbut-2-enyl diphosphate site is built by His-41 and His-74. Residues His-41 and His-74 each coordinate dimethylallyl diphosphate. Residues His-41 and His-74 each coordinate isopentenyl diphosphate. Cys-96 lines the [4Fe-4S] cluster pocket. Residue His-124 coordinates (2E)-4-hydroxy-3-methylbut-2-enyl diphosphate. Dimethylallyl diphosphate is bound at residue His-124. His-124 contributes to the isopentenyl diphosphate binding site. Glu-126 functions as the Proton donor in the catalytic mechanism. (2E)-4-hydroxy-3-methylbut-2-enyl diphosphate is bound at residue Thr-167. Cys-197 serves as a coordination point for [4Fe-4S] cluster. Ser-225, Ser-226, Asn-227, and Ser-269 together coordinate (2E)-4-hydroxy-3-methylbut-2-enyl diphosphate. Dimethylallyl diphosphate contacts are provided by Ser-225, Ser-226, Asn-227, and Ser-269. Residues Ser-225, Ser-226, Asn-227, and Ser-269 each coordinate isopentenyl diphosphate.

Belongs to the IspH family. [4Fe-4S] cluster is required as a cofactor.

It catalyses the reaction isopentenyl diphosphate + 2 oxidized [2Fe-2S]-[ferredoxin] + H2O = (2E)-4-hydroxy-3-methylbut-2-enyl diphosphate + 2 reduced [2Fe-2S]-[ferredoxin] + 2 H(+). It carries out the reaction dimethylallyl diphosphate + 2 oxidized [2Fe-2S]-[ferredoxin] + H2O = (2E)-4-hydroxy-3-methylbut-2-enyl diphosphate + 2 reduced [2Fe-2S]-[ferredoxin] + 2 H(+). It functions in the pathway isoprenoid biosynthesis; dimethylallyl diphosphate biosynthesis; dimethylallyl diphosphate from (2E)-4-hydroxy-3-methylbutenyl diphosphate: step 1/1. It participates in isoprenoid biosynthesis; isopentenyl diphosphate biosynthesis via DXP pathway; isopentenyl diphosphate from 1-deoxy-D-xylulose 5-phosphate: step 6/6. Catalyzes the conversion of 1-hydroxy-2-methyl-2-(E)-butenyl 4-diphosphate (HMBPP) into a mixture of isopentenyl diphosphate (IPP) and dimethylallyl diphosphate (DMAPP). Acts in the terminal step of the DOXP/MEP pathway for isoprenoid precursor biosynthesis. This is 4-hydroxy-3-methylbut-2-enyl diphosphate reductase from Haemophilus influenzae (strain 86-028NP).